A 362-amino-acid chain; its full sequence is Cobalt-precorrin-5B C(1)-methyltransferase (362 aa).

It belongs to the CbiD family.

The catalysed reaction is Co-precorrin-5B + S-adenosyl-L-methionine = Co-precorrin-6A + S-adenosyl-L-homocysteine. It functions in the pathway cofactor biosynthesis; adenosylcobalamin biosynthesis; cob(II)yrinate a,c-diamide from sirohydrochlorin (anaerobic route): step 6/10. Catalyzes the methylation of C-1 in cobalt-precorrin-5B to form cobalt-precorrin-6A. The protein is Cobalt-precorrin-5B C(1)-methyltransferase of Burkholderia multivorans (strain ATCC 17616 / 249).